Consider the following 478-residue polypeptide: NAD-dependent malic enzyme (478 aa).

The 75-residue stretch at 12-86 (TIRLQFEKDI…GVKIVNVSDR (75 aa)) folds into the ACT domain. Tyrosine 114 (proton donor) is an active-site residue. The active-site Proton acceptor is lysine 169. A divalent metal cation is bound by residues glutamate 211, aspartate 212, and aspartate 237. Residues 270-273 (IGAA), asparagine 363, and asparagine 393 each bind NAD(+).

This sequence belongs to the malic enzymes family. Homotetramer. The cofactor is Mg(2+). It depends on Mn(2+) as a cofactor.

It catalyses the reaction (S)-malate + NAD(+) = pyruvate + CO2 + NADH. It carries out the reaction oxaloacetate + H(+) = pyruvate + CO2. With respect to regulation, the activity is enhanced 5-7 times by ammonium and potassium. Functionally, in addition to the NAD-dependent oxidative decarboxylation of L-malate, the enzyme catalyzes the decarboxylation of oxaloacetate. The protein is NAD-dependent malic enzyme of Geobacillus stearothermophilus (Bacillus stearothermophilus).